The following is a 209-amino-acid chain: Uridine kinase (209 aa).

12 to 19 lines the ATP pocket; sequence GGSASGKT.

This sequence belongs to the uridine kinase family.

It localises to the cytoplasm. It carries out the reaction uridine + ATP = UMP + ADP + H(+). It catalyses the reaction cytidine + ATP = CMP + ADP + H(+). Its pathway is pyrimidine metabolism; CTP biosynthesis via salvage pathway; CTP from cytidine: step 1/3. It participates in pyrimidine metabolism; UMP biosynthesis via salvage pathway; UMP from uridine: step 1/1. The sequence is that of Uridine kinase from Chloroflexus aurantiacus (strain ATCC 29366 / DSM 635 / J-10-fl).